The sequence spans 301 residues: GPN-loop GTPase 3 (301 aa).

Residue 13-18 coordinates GTP; sequence GAGKST. A Gly-Pro-Asn (GPN)-loop; involved in dimer interface motif is present at residues 70-72; sequence GPN. GTP is bound at residue 176–179; it reads SKMD. A disordered region spans residues 212-232; it reads IAEGQDAEDDESKAPDEKDQV. Over residues 223–232 the composition is skewed to basic and acidic residues; the sequence is SKAPDEKDQV.

It belongs to the GPN-loop GTPase family. In terms of assembly, heterodimers with GPN1 or GPN2. Binds to RNA polymerase II (RNAPII).

Functionally, small GTPase required for proper nuclear import of RNA polymerase II and III (RNAPII and RNAPIII). May act at an RNAP assembly step prior to nuclear import. This is GPN-loop GTPase 3 from Gibberella zeae (strain ATCC MYA-4620 / CBS 123657 / FGSC 9075 / NRRL 31084 / PH-1) (Wheat head blight fungus).